Here is a 244-residue protein sequence, read N- to C-terminus: Methylthioribulose-1-phosphate dehydratase (244 aa).

Cys-104 contributes to the substrate binding site. The Zn(2+) site is built by His-122 and His-124. Glu-148 functions as the Proton donor/acceptor in the catalytic mechanism. Residue His-204 coordinates Zn(2+).

This sequence belongs to the aldolase class II family. MtnB subfamily. Zn(2+) serves as cofactor.

The protein localises to the cytoplasm. It carries out the reaction 5-(methylsulfanyl)-D-ribulose 1-phosphate = 5-methylsulfanyl-2,3-dioxopentyl phosphate + H2O. It functions in the pathway amino-acid biosynthesis; L-methionine biosynthesis via salvage pathway; L-methionine from S-methyl-5-thio-alpha-D-ribose 1-phosphate: step 2/6. Catalyzes the dehydration of methylthioribulose-1-phosphate (MTRu-1-P) into 2,3-diketo-5-methylthiopentyl-1-phosphate (DK-MTP-1-P). In Cryptococcus neoformans var. neoformans serotype D (strain B-3501A) (Filobasidiella neoformans), this protein is Methylthioribulose-1-phosphate dehydratase.